Consider the following 283-residue polypeptide: Small ribosomal subunit protein uS2 (283 aa).

The disordered stretch occupies residues 229 to 283 (RSAGKSGEQPAEAEPMPDWERELLEGDGAKTEAKAEEPKAEAKKADEAPEAEKSN). Residues 246–283 (DWERELLEGDGAKTEAKAEEPKAEAKKADEAPEAEKSN) are compositionally biased toward basic and acidic residues.

It belongs to the universal ribosomal protein uS2 family.

The protein is Small ribosomal subunit protein uS2 of Cutibacterium acnes (strain DSM 16379 / KPA171202) (Propionibacterium acnes).